The primary structure comprises 231 residues: Small proline-rich protein 3 (231 aa).

A disordered region spans residues 1–104; that stretch reads MSSYQQKQPF…GSGYSVVPQP (104 aa). The residue at position 2 (Ser-2) is an N-acetylserine. Repeat copies occupy residues 55 to 62, 63 to 70, 71 to 78, 79 to 86, 87 to 94, 95 to 102, 103 to 110, 111 to 118, 119 to 126, 127 to 134, 135 to 142, 143 to 150, 151 to 158, 159 to 166, 167 to 174, 175 to 182, 183 to 190, 191 to 198, 199 to 206, 207 to 214, and 215 to 222. Residues 55–222 are 21 X 8 AA approximate tandem repeats; sequence EQGYVKIPEQ…VQEPNPSIVT (168 aa). Residues 80-94 are compositionally biased toward polar residues; the sequence is SGNTKVPESGCTSVP. The disordered stretch occupies residues 188-231; the sequence is KVPESGCTSVPGPGYPTVPQPGYTKVQEPNPSIVTPGLSQKKTK. The segment covering 214 to 231 has biased composition (polar residues); sequence QEPNPSIVTPGLSQKKTK.

The protein belongs to the cornifin (SPRR) family. As to expression, suprabasal layers of the squamous epithelia of esophagus, tongue and oral mucosa.

The protein resides in the cytoplasm. In terms of biological role, can serve as a substrate in transglutaminase-catalyzed cross linking reactions and can function as a cross-linked envelope precursor. The protein is Small proline-rich protein 3 (SPRR3) of Oryctolagus cuniculus (Rabbit).